We begin with the raw amino-acid sequence, 303 residues long: Bifunctional protein FolD (303 aa).

NADP(+) is bound by residues 165-167, Ser190, and Ile231; that span reads GRS.

This sequence belongs to the tetrahydrofolate dehydrogenase/cyclohydrolase family. Homodimer.

The enzyme catalyses (6R)-5,10-methylene-5,6,7,8-tetrahydrofolate + NADP(+) = (6R)-5,10-methenyltetrahydrofolate + NADPH. It carries out the reaction (6R)-5,10-methenyltetrahydrofolate + H2O = (6R)-10-formyltetrahydrofolate + H(+). Its pathway is one-carbon metabolism; tetrahydrofolate interconversion. Its function is as follows. Catalyzes the oxidation of 5,10-methylenetetrahydrofolate to 5,10-methenyltetrahydrofolate and then the hydrolysis of 5,10-methenyltetrahydrofolate to 10-formyltetrahydrofolate. This Prochlorococcus marinus (strain NATL1A) protein is Bifunctional protein FolD.